We begin with the raw amino-acid sequence, 497 residues long: Mechanosensitive ion channel protein 1, mitochondrial (497 aa).

Residues 1–86 (MAGVRLSLLK…RAFSSKSDDF (86 aa)) constitute a mitochondrion transit peptide. 5 helical membrane-spanning segments follow: residues 152–172 (DVIVPVSLTMTGTLFAWVVMP), 216–236 (LVTFIAFAQIAAMVAPTTIAA), 238–258 (YFSPTVKGAVILSLVWFLYRW), 280–300 (VLTLDKVSSVGLFAIGLMASA), and 305–325 (VAVQSILTVGGVGGVATAFAA).

This sequence belongs to the MscS (TC 1.A.23) family.

The protein resides in the mitochondrion membrane. Its function is as follows. Mechanosensitive channel that opens in response to stretch forces in the membrane lipid bilayer. This chain is Mechanosensitive ion channel protein 1, mitochondrial (MSL1), found in Arabidopsis thaliana (Mouse-ear cress).